The primary structure comprises 347 residues: NADH-ubiquinone oxidoreductase chain 2 (347 aa).

Helical transmembrane passes span 3–23, 25–45, 59–79, 96–116, 122–142, 149–169, 201–221, 239–259, 274–294, and 326–346; these read PMIFIILLATIMLGSSIVMMS, HWFMTWLGFEMNMMAIVPVLM, YFLTQATASMILMLAIIINLM, MLITIALVMKLGLAPFHFWVP, IPLSSGLILLTWQKIAPLSLL, INMELFLTMSLLSIVIGGWGG, SFLNLLVYILMTSSMFALLIF, IIATMSLIILLSLGGLPPLTG, NSTILPTLMAISALLNLFFYI, and ILPLITISTLALPLTPLFLML.

This sequence belongs to the complex I subunit 2 family. As to quaternary structure, core subunit of respiratory chain NADH dehydrogenase (Complex I) which is composed of 45 different subunits. Interacts with TMEM242.

The protein localises to the mitochondrion inner membrane. It carries out the reaction a ubiquinone + NADH + 5 H(+)(in) = a ubiquinol + NAD(+) + 4 H(+)(out). Core subunit of the mitochondrial membrane respiratory chain NADH dehydrogenase (Complex I) that is believed to belong to the minimal assembly required for catalysis. Complex I functions in the transfer of electrons from NADH to the respiratory chain. The immediate electron acceptor for the enzyme is believed to be ubiquinone. In Crocidura hildegardeae (Hildegarde's shrew), this protein is NADH-ubiquinone oxidoreductase chain 2.